A 418-amino-acid polypeptide reads, in one-letter code: Tyrosine--tRNA ligase (418 aa).

Tyrosine 34 contacts L-tyrosine. Residues 39 to 48 (PTADSLHLGH) carry the 'HIGH' region motif. L-tyrosine-binding residues include tyrosine 169 and glutamine 173. Positions 229-233 (KFGKS) match the 'KMSKS' region motif. Position 232 (lysine 232) interacts with ATP. The S4 RNA-binding domain occupies 352–418 (LNLVDMLVTA…GKKKYAVLTY (67 aa)).

The protein belongs to the class-I aminoacyl-tRNA synthetase family. TyrS type 1 subfamily. As to quaternary structure, homodimer.

Its subcellular location is the cytoplasm. It carries out the reaction tRNA(Tyr) + L-tyrosine + ATP = L-tyrosyl-tRNA(Tyr) + AMP + diphosphate + H(+). Functionally, catalyzes the attachment of tyrosine to tRNA(Tyr) in a two-step reaction: tyrosine is first activated by ATP to form Tyr-AMP and then transferred to the acceptor end of tRNA(Tyr). This chain is Tyrosine--tRNA ligase, found in Streptococcus pyogenes serotype M12 (strain MGAS2096).